The chain runs to 233 residues: Octanoyltransferase (233 aa).

The BPL/LPL catalytic domain maps to 36-211; sequence DTTPDEIWLV…EFTRQLGYPT (176 aa). Substrate is bound by residues 75–82, 142–144, and 155–157; these read RGGQVTYH, SLG, and GLA. Catalysis depends on C173, which acts as the Acyl-thioester intermediate.

It belongs to the LipB family.

The protein localises to the cytoplasm. The enzyme catalyses octanoyl-[ACP] + L-lysyl-[protein] = N(6)-octanoyl-L-lysyl-[protein] + holo-[ACP] + H(+). It participates in protein modification; protein lipoylation via endogenous pathway; protein N(6)-(lipoyl)lysine from octanoyl-[acyl-carrier-protein]: step 1/2. Its function is as follows. Catalyzes the transfer of endogenously produced octanoic acid from octanoyl-acyl-carrier-protein onto the lipoyl domains of lipoate-dependent enzymes. Lipoyl-ACP can also act as a substrate although octanoyl-ACP is likely to be the physiological substrate. The chain is Octanoyltransferase from Yersinia pestis bv. Antiqua (strain Antiqua).